We begin with the raw amino-acid sequence, 326 residues long: tRNA U34 carboxymethyltransferase (326 aa).

Residues Lys-91, Trp-105, Lys-110, Gly-130, Met-196, Tyr-200, and Arg-315 each contribute to the carboxy-S-adenosyl-L-methionine site.

Belongs to the class I-like SAM-binding methyltransferase superfamily. CmoB family. In terms of assembly, homotetramer.

It carries out the reaction carboxy-S-adenosyl-L-methionine + 5-hydroxyuridine(34) in tRNA = 5-carboxymethoxyuridine(34) in tRNA + S-adenosyl-L-homocysteine + H(+). In terms of biological role, catalyzes carboxymethyl transfer from carboxy-S-adenosyl-L-methionine (Cx-SAM) to 5-hydroxyuridine (ho5U) to form 5-carboxymethoxyuridine (cmo5U) at position 34 in tRNAs. The sequence is that of tRNA U34 carboxymethyltransferase from Tolumonas auensis (strain DSM 9187 / NBRC 110442 / TA 4).